Here is a 95-residue protein sequence, read N- to C-terminus: MKFLLLVLAALGFLTQVIPASAGGSKCVSNTPGYCRTCCHWGETALFMCNASRKCCISYSFLPKPDLPQLIGNHWQSRRRNTQRKDKKQQTTVTS.

An N-terminal signal peptide occupies residues 1-22; it reads MKFLLLVLAALGFLTQVIPASA. 3 disulfides stabilise this stretch: Cys27/Cys55, Cys35/Cys49, and Cys39/Cys56. The segment at 74–95 is disordered; it reads HWQSRRRNTQRKDKKQQTTVTS. Residues 76-87 show a composition bias toward basic residues; sequence QSRRRNTQRKDK.

This sequence belongs to the beta-defensin family.

Its subcellular location is the secreted. In terms of biological role, has antibacterial activity. In Homo sapiens (Human), this protein is Beta-defensin 132 (DEFB132).